We begin with the raw amino-acid sequence, 343 residues long: Selenide, water dikinase (343 aa).

The active site involves Cys15. ATP-binding positions include Lys18 and 46 to 48 (NKD). Asp49 serves as a coordination point for Mg(2+). Residues Asp66, Asp89, and 137–139 (GHS) each bind ATP. Asp89 serves as a coordination point for Mg(2+). A Mg(2+)-binding site is contributed by Asp225.

It belongs to the selenophosphate synthase 1 family. Class I subfamily. As to quaternary structure, homodimer. Mg(2+) serves as cofactor.

It carries out the reaction hydrogenselenide + ATP + H2O = selenophosphate + AMP + phosphate + 2 H(+). Synthesizes selenophosphate from selenide and ATP. In Sulfurovum sp. (strain NBC37-1), this protein is Selenide, water dikinase.